A 308-amino-acid polypeptide reads, in one-letter code: Ribonuclease HIII (308 aa).

The 217-residue stretch at 88–304 (FHCIGSDEAG…RDKAIHLINQ (217 aa)) folds into the RNase H type-2 domain. Residues Asp94, Glu95, and Asp199 each contribute to the a divalent metal cation site.

The protein belongs to the RNase HII family. RnhC subfamily. Mn(2+) serves as cofactor. It depends on Mg(2+) as a cofactor.

It localises to the cytoplasm. The enzyme catalyses Endonucleolytic cleavage to 5'-phosphomonoester.. Its function is as follows. Endonuclease that specifically degrades the RNA of RNA-DNA hybrids. The sequence is that of Ribonuclease HIII from Staphylococcus epidermidis (strain ATCC 35984 / DSM 28319 / BCRC 17069 / CCUG 31568 / BM 3577 / RP62A).